Reading from the N-terminus, the 346-residue chain is 36.4 kDa proline-rich protein (346 aa).

The disordered stretch occupies residues 11–144; sequence PYPPSTPKHP…PFTPKPPSPI (134 aa). Pro residues-rich tracts occupy residues 25–42, 51–81, and 89–144; these read KVKP…PSTP, VKPP…PSTP, and QKPC…PSPI.

The chain is 36.4 kDa proline-rich protein (TPRP-F1) from Solanum lycopersicum (Tomato).